A 333-amino-acid polypeptide reads, in one-letter code: PDZ domain-containing protein GIPC1 (333 aa).

The span at Met-1–Ala-11 shows a compositional bias: basic residues. Residues Met-1 to Ala-53 form a disordered region. Residues Leu-27–Ala-39 show a composition bias toward gly residues. Ser-68 is subject to Phosphoserine. Residues Glu-133–Glu-213 enclose the PDZ domain. Phosphoserine is present on residues Ser-222, Ser-225, and Ser-232. The tract at residues Gln-223–Arg-244 is disordered. A compositionally biased stretch (gly residues) spans Gly-228–Arg-240. The residue at position 242 (Thr-242) is a Phosphothreonine. Ser-247 carries the phosphoserine modification.

This sequence belongs to the GIPC family. As to quaternary structure, interacts with GLUT1 (C-terminus), ACTN1, KIF1B, MYO6 and PLEKHG5. Interacts with RGS19 C-terminus. Interacts with SDC4/syndecan-4 and SEMA4C/semaphorin-4C. In terms of tissue distribution, widely expressed.

The protein localises to the cytoplasm. It localises to the membrane. Inhibits endothelial cell migration (in vitro). May be involved in G protein-linked signaling. The protein is PDZ domain-containing protein GIPC1 (Gipc1) of Mus musculus (Mouse).